The primary structure comprises 138 residues: Superoxide dismutase [Mn] (138 aa).

The Mn(2+) site is built by His-2, His-49, Asp-133, and His-137.

This sequence belongs to the iron/manganese superoxide dismutase family. Mn(2+) serves as cofactor.

It catalyses the reaction 2 superoxide + 2 H(+) = H2O2 + O2. Destroys superoxide anion radicals which are normally produced within the cells and which are toxic to biological systems. The protein is Superoxide dismutase [Mn] (sodA) of Mycolicibacterium phlei (Mycobacterium phlei).